Consider the following 560-residue polypeptide: DNA ligase B (560 aa).

K124 serves as the catalytic N6-AMP-lysine intermediate.

Belongs to the NAD-dependent DNA ligase family. LigB subfamily.

It catalyses the reaction NAD(+) + (deoxyribonucleotide)n-3'-hydroxyl + 5'-phospho-(deoxyribonucleotide)m = (deoxyribonucleotide)n+m + AMP + beta-nicotinamide D-nucleotide.. Catalyzes the formation of phosphodiester linkages between 5'-phosphoryl and 3'-hydroxyl groups in double-stranded DNA using NAD as a coenzyme and as the energy source for the reaction. In Shigella flexneri, this protein is DNA ligase B.